The following is a 1258-amino-acid chain: Structural polyprotein (1258 aa).

A host transcription inhibition region spans residues 41–75 (PQAQQMQQLIAAVNTLAIRQNGTRTPGQQRRKRQP). The disordered stretch occupies residues 59-114 (RQNGTRTPGQQRRKRQPNKPKRKQTPPKKQNPAKTKNKQKPQPPKPKKRKPGKRER). A Nuclear localization signal motif is present at residues 68–109 (QQRRKRQPNKPKRKQTPPKKQNPAKTKNKQKPQPPKPKKRKP). 2 stretches are compositionally biased toward basic residues: residues 69–84 (QRRKRQPNKPKRKQTP) and 93–114 (TKNKQKPQPPKPKKRKPGKRER). Positions 96 to 124 (KQKPQPPKPKKRKPGKRERKCMKIENDCI) are binding to the viral RNA. Residues 109 to 123 (PGKRERKCMKIENDC) are ribosome-binding. Cys123 and Cys138 are disulfide-bonded. The 149-residue stretch at 123–271 (CIFEVKLEGK…RITPEGTEEW (149 aa)) folds into the Peptidase S3 domain. Catalysis depends on His149, which acts as the Charge relay system. The short motif at 154-164 (IDNPDLAKLAF) is the Nuclear export signal element. Residues 165-170 (KKSSKY) are interaction with spike glycoprotein E2. The active-site Charge relay system is the Asp171. Residues 193-203 (PEGHYNWHHGA) are dimerization of the capsid protein. The active-site Charge relay system is Ser223. The dimerization of the capsid protein stretch occupies residues 229 to 233 (DNKGR). Positions 272–284 (TALVTTACILSNL) are functions as an uncleaved signal peptide for the precursor of protein E3/E2. Cystine bridges form between Cys279/Cys288, Cys293/Cys297, Cys296/Cys328, Cys356/Cys462, Cys359/Cys365, Cys428/Cys442, Cys490/Cys601, Cys538/Cys562, and Cys540/Cys557. N-linked (GlcNAc...) asparagine; by host glycosylation occurs at Asn283. Over 338–696 (GLTEDYKAYK…PHEIFSYYYG (359 aa)) the chain is Extracellular. Interaction with host Mxra8 receptor stretches follow at residues 363–366 (QFCY) and 399–401 (HSW). The segment at 521-524 (TGNK) is interaction with host Mxra8 receptor. Asn537 is a glycosylation site (N-linked (GlcNAc...) asparagine; by host). The interval 553–559 (EFDNCEV) is interaction with host Mxra8 receptor. A glycan (N-linked (GlcNAc...) asparagine; by host) is linked at Asn598. The chain crosses the membrane as a helical span at residues 697 to 717 (LYPATTVAVCVGLACVILLAL). Topologically, residues 718–758 (SASCCLCVSARNKCLTPYALTPGAVVPCTLSLLCCAPRAKA) are cytoplasmic. Residues 726–730 (SARNK) form an interaction with the capsid protein region. Residues Cys731, Cys751, and Cys752 are each lipidated (S-palmitoyl cysteine; by host). Residues 731–751 (CLTPYALTPGAVVPCTLSLLC) are transient transmembrane before p62-6K protein processing. A disulfide bridge connects residues Cys731 and Cys752. Residues 759-773 (ATFAETAAYLWAENQ) are Extracellular-facing. A helical transmembrane segment spans residues 774–794 (TVFWMQFAIPVACFMIVTYCL). The Cytoplasmic segment spans residues 795–796 (RH). The helical transmembrane segment at 797–817 (LMLCCRTASFLVAVSLGMGAT) threads the bilayer. Extracellular segments follow at residues 818-819 (QA) and 820-1234 (YEHS…HTMG). Cystine bridges form between Cys868-Cys933, Cys881-Cys913, Cys882-Cys915, and Cys887-Cys897. The interval 903 to 920 (VYPFLWGGAYCFCDSENT) is E1 fusion peptide loop. Asn960 and Asn1089 each carry an N-linked (GlcNAc...) asparagine; by host glycan. Disulfide bonds link Cys1078–Cys1090, Cys1120–Cys1195, Cys1125–Cys1199, and Cys1147–Cys1189. Residues 1235 to 1255 (GATVVIAIGITIFLIVTCIAF) traverse the membrane as a helical segment. Cys1252 carries S-palmitoyl cysteine; by host lipidation. Residues 1256 to 1258 (SRH) are Cytoplasmic-facing.

As to quaternary structure, homodimer. Homomultimer. Interacts with host karyopherin KPNA4; this interaction allows the nuclear import of the viral capsid protein. Interacts with spike glycoprotein E2. Interacts with host IRAK1; the interaction leads to inhibition of IRAK1-dependent signaling. The precursor of protein E3/E2 and E1 form a heterodimer shortly after synthesis. In terms of assembly, the precursor of protein E3/E2 and E1 form a heterodimer shortly after synthesis. Processing of the precursor of protein E3/E2 into E2 and E3 results in a heterodimer of the spike glycoproteins E2 and E1. Spike at virion surface are constituted of a trimer of E2-E1 heterodimers. After target cell attachment and endocytosis, E1 change conformation to form homotrimers. Interacts with 6K protein. As to quaternary structure, interacts with spike glycoprotein E1. Processing of the precursor of protein E3/E2 into E2 and E3 results in a heterodimer of the spike glycoproteins E2 and E1. Spike at virion surface are constituted of a trimer of E2-E1 heterodimers. Interacts with 6K protein. Interacts with host MXRA8; this interaction mediates virus entry. Oligomer. Interacts with spike glycoprotein E1. Interacts with spike glycoprotein E2. Post-translationally, structural polyprotein: Specific enzymatic cleavages in vivo yield mature proteins. Capsid protein is auto-cleaved during polyprotein translation, unmasking a signal peptide at the N-terminus of the precursor of E3/E2. The remaining polyprotein is then targeted to the host endoplasmic reticulum, where host signal peptidase cleaves it into pE2, 6K and E1 proteins. pE2 is further processed to mature E3 and E2 by host furin in trans-Golgi vesicle. In terms of processing, palmitoylated via thioester bonds. These palmitoylations may induce disruption of the C-terminus transmembrane. This would result in the reorientation of E2 C-terminus from lumenal to cytoplasmic side. N-glycosylated. Post-translationally, palmitoylated via thioester bonds.

The protein resides in the virion. The protein localises to the host cytoplasm. It localises to the host cell membrane. Its subcellular location is the host nucleus. It is found in the virion membrane. The protein resides in the host Golgi apparatus. The protein localises to the host trans-Golgi network. It localises to the host endoplasmic reticulum. It carries out the reaction Autocatalytic release of the core protein from the N-terminus of the togavirus structural polyprotein by hydrolysis of a -Trp-|-Ser- bond.. In terms of biological role, forms an icosahedral capsid with a T=4 symmetry composed of 240 copies of the capsid protein surrounded by a lipid membrane through which penetrate 80 spikes composed of trimers of E1-E2 heterodimers. The capsid protein binds to the viral RNA genome at a site adjacent to a ribosome binding site for viral genome translation following genome release. Possesses a protease activity that results in its autocatalytic cleavage from the nascent structural protein. Following its self-cleavage, the capsid protein transiently associates with ribosomes, and within several minutes the protein binds to viral RNA and rapidly assembles into icosahedric core particles. The resulting nucleocapsid eventually associates with the cytoplasmic domain of the spike glycoprotein E2 at the cell membrane, leading to budding and formation of mature virions. In case of infection, new virions attach to target cells and after clathrin-mediated endocytosis their membrane fuses with the host endosomal membrane. This leads to the release of the nucleocapsid into the cytoplasm, followed by an uncoating event necessary for the genomic RNA to become accessible. The uncoating might be triggered by the interaction of capsid proteins with ribosomes. Binding of ribosomes would release the genomic RNA since the same region is genomic RNA-binding and ribosome-binding. Specifically inhibits interleukin-1 receptor-associated kinase 1/IRAK1-dependent signaling during viral entry, representing a means by which the alphaviruses may evade innate immune detection and activation prior to viral gene expression. Functionally, provides the signal sequence for the translocation of the precursor of protein E3/E2 to the host endoplasmic reticulum. Furin-cleaved E3 remains associated with spike glycoprotein E1 and mediates pH protection of the latter during the transport via the secretory pathway. After virion release from the host cell, the assembly protein E3 is gradually released in the extracellular space. Plays a role in viral attachment to target host cell, by binding to the cell receptor MXRA8. Synthesized as a p62 precursor which is processed by furin at the cell membrane just before virion budding, giving rise to E2-E1 heterodimer. The p62-E1 heterodimer is stable, whereas E2-E1 is unstable and dissociate at low pH. p62 is processed at the last step, presumably to avoid E1 fusion activation before its final export to cell surface. E2 C-terminus contains a transitory transmembrane that would be disrupted by palmitoylation, resulting in reorientation of the C-terminal tail from lumenal to cytoplasmic side. This step is critical since E2 C-terminus is involved in budding by interacting with capsid proteins. This release of E2 C-terminus in cytoplasm occurs lately in protein export, and precludes premature assembly of particles at the endoplasmic reticulum membrane. Its function is as follows. Acts as a viroporin that participates in virus glycoprotein processing and transport to the plasma membrane, cell permeabilization and budding of viral particles. Disrupts the calcium homeostasis of the cell, probably at the endoplasmic reticulum level. This leads to cytoplasmic calcium elevation. Because of its lipophilic properties, the 6K protein is postulated to influence the selection of lipids that interact with the transmembrane domains of the glycoproteins, which, in turn, affects the deformability of the bilayer required for the extreme curvature that occurs as budding proceeds. Present in low amount in virions, about 3% compared to viral glycoproteins. In terms of biological role, class II viral fusion protein. Fusion activity is inactive as long as E1 is bound to E2 in mature virion. After virus attachment to target cell and endocytosis, acidification of the endosome induce dissociation of E1/E2 heterodimer and concomitant trimerization of the E1 subunits. This E1 trimer is fusion active, and promotes release of viral nucleocapsid in cytoplasm after endosome and viral membrane fusion. Efficient fusion requires the presence of cholesterol and sphingolipid in the target membrane. The protein is Structural polyprotein of Middelburg virus.